Consider the following 313-residue polypeptide: B3 domain-containing protein At2g31720 (313 aa).

The disordered stretch occupies residues 80-110 (KNQDPEQNPNRVASSPSSCHLESKRPQKVVS). Polar residues predominate over residues 84-99 (PEQNPNRVASSPSSCH). A DNA-binding region (TF-B3) is located at residues 169–267 (WKQILDMDFL…MLFFAFVLSD (99 aa)).

Its subcellular location is the nucleus. This Arabidopsis thaliana (Mouse-ear cress) protein is B3 domain-containing protein At2g31720 (ARF70).